The sequence spans 521 residues: Glutamate--cysteine ligase (521 aa).

This sequence belongs to the glutamate--cysteine ligase type 1 family. Type 1 subfamily.

The catalysed reaction is L-cysteine + L-glutamate + ATP = gamma-L-glutamyl-L-cysteine + ADP + phosphate + H(+). The protein operates within sulfur metabolism; glutathione biosynthesis; glutathione from L-cysteine and L-glutamate: step 1/2. The polypeptide is Glutamate--cysteine ligase (Aliivibrio fischeri (strain MJ11) (Vibrio fischeri)).